The chain runs to 350 residues: Methionine import ATP-binding protein MetN (350 aa).

In terms of domain architecture, ABC transporter spans 2–241 (IQIKNLKKEY…PQAPVTRSFV (240 aa)). 38–45 (GHSGAGKS) provides a ligand contact to ATP.

This sequence belongs to the ABC transporter superfamily. Methionine importer (TC 3.A.1.24) family. As to quaternary structure, the complex is composed of two ATP-binding proteins (MetN), two transmembrane proteins (MetI) and a solute-binding protein (MetQ).

Its subcellular location is the cell inner membrane. It carries out the reaction L-methionine(out) + ATP + H2O = L-methionine(in) + ADP + phosphate + H(+). The catalysed reaction is D-methionine(out) + ATP + H2O = D-methionine(in) + ADP + phosphate + H(+). Functionally, part of the ABC transporter complex MetNIQ involved in methionine import. Responsible for energy coupling to the transport system. This chain is Methionine import ATP-binding protein MetN, found in Francisella tularensis subsp. holarctica (strain LVS).